A 48-amino-acid chain; its full sequence is DNA-directed RNA polymerase subunit Rpo12 (48 aa).

Positions 9, 26, and 29 each coordinate Zn(2+).

This sequence belongs to the archaeal Rpo12/eukaryotic RPC10 RNA polymerase subunit family. As to quaternary structure, part of the RNA polymerase complex. Zn(2+) is required as a cofactor.

The protein resides in the cytoplasm. It catalyses the reaction RNA(n) + a ribonucleoside 5'-triphosphate = RNA(n+1) + diphosphate. DNA-dependent RNA polymerase (RNAP) catalyzes the transcription of DNA into RNA using the four ribonucleoside triphosphates as substrates. In Saccharolobus islandicus (strain Y.N.15.51 / Yellowstone #2) (Sulfolobus islandicus), this protein is DNA-directed RNA polymerase subunit Rpo12.